The sequence spans 110 residues: Large ribosomal subunit protein uL22 (110 aa).

It belongs to the universal ribosomal protein uL22 family. As to quaternary structure, part of the 50S ribosomal subunit.

This protein binds specifically to 23S rRNA; its binding is stimulated by other ribosomal proteins, e.g. L4, L17, and L20. It is important during the early stages of 50S assembly. It makes multiple contacts with different domains of the 23S rRNA in the assembled 50S subunit and ribosome. Functionally, the globular domain of the protein is located near the polypeptide exit tunnel on the outside of the subunit, while an extended beta-hairpin is found that lines the wall of the exit tunnel in the center of the 70S ribosome. The sequence is that of Large ribosomal subunit protein uL22 from Mycoplasma mobile (strain ATCC 43663 / 163K / NCTC 11711) (Mesomycoplasma mobile).